A 225-amino-acid chain; its full sequence is Uracil-DNA glycosylase (225 aa).

The active-site Proton acceptor is Asp68.

It belongs to the uracil-DNA glycosylase (UDG) superfamily. UNG family.

Its subcellular location is the cytoplasm. It catalyses the reaction Hydrolyzes single-stranded DNA or mismatched double-stranded DNA and polynucleotides, releasing free uracil.. In terms of biological role, excises uracil residues from the DNA which can arise as a result of misincorporation of dUMP residues by DNA polymerase or due to deamination of cytosine. The sequence is that of Uracil-DNA glycosylase from Mycolicibacterium vanbaalenii (strain DSM 7251 / JCM 13017 / BCRC 16820 / KCTC 9966 / NRRL B-24157 / PYR-1) (Mycobacterium vanbaalenii).